A 124-amino-acid polypeptide reads, in one-letter code: Alpha-endosulfine (124 aa).

Ser74 carries the phosphoserine; by GWL modification. Residues Val99–Gly124 are disordered. Over residues Arg113–Gly124 the composition is skewed to polar residues.

This sequence belongs to the endosulfine family. Post-translationally, phosphorylation at Ser-74 by gwl during mitosis is essential for interaction with ppp2r2d (PR55-delta) and subsequent inactivation of PP2A.

The protein localises to the cytoplasm. In terms of biological role, protein phosphatase inhibitor that specifically inhibits protein phosphatase 2A (PP2A) during mitosis. When phosphorylated at Ser-67 during mitosis, specifically interacts with ppp2r2d (PR55-delta) and inhibits its activity, leading to inactivation of PP2A, an essential condition to keep cyclin-B1-CDK1 activity high during M phase. The polypeptide is Alpha-endosulfine (ensa) (Danio rerio (Zebrafish)).